The primary structure comprises 126 residues: MASEDVTITVRLIRSFEHRNFRPVVYHGVHLDQTVKDFIVFLKQDIPLRASLPPPFRNYKYDKLKIVHQAHKSKTNELVLSLEDDDRLLLKEDSTLKAAGIASETEIAFFCEEDYKNYKANPISSW.

The protein belongs to the UPF0538 family.

This chain is UPF0538 protein C2orf76 homolog, found in Bos taurus (Bovine).